Consider the following 367-residue polypeptide: UDP-N-acetylglucosamine--N-acetylmuramyl-(pentapeptide) pyrophosphoryl-undecaprenol N-acetylglucosamine transferase (367 aa).

Residues 15-17 (TGG), Asn-126, Arg-169, Ser-197, and Gln-298 contribute to the UDP-N-acetyl-alpha-D-glucosamine site.

Belongs to the glycosyltransferase 28 family. MurG subfamily.

It localises to the cell inner membrane. It catalyses the reaction di-trans,octa-cis-undecaprenyl diphospho-N-acetyl-alpha-D-muramoyl-L-alanyl-D-glutamyl-meso-2,6-diaminopimeloyl-D-alanyl-D-alanine + UDP-N-acetyl-alpha-D-glucosamine = di-trans,octa-cis-undecaprenyl diphospho-[N-acetyl-alpha-D-glucosaminyl-(1-&gt;4)]-N-acetyl-alpha-D-muramoyl-L-alanyl-D-glutamyl-meso-2,6-diaminopimeloyl-D-alanyl-D-alanine + UDP + H(+). It participates in cell wall biogenesis; peptidoglycan biosynthesis. Functionally, cell wall formation. Catalyzes the transfer of a GlcNAc subunit on undecaprenyl-pyrophosphoryl-MurNAc-pentapeptide (lipid intermediate I) to form undecaprenyl-pyrophosphoryl-MurNAc-(pentapeptide)GlcNAc (lipid intermediate II). This Bradyrhizobium sp. (strain BTAi1 / ATCC BAA-1182) protein is UDP-N-acetylglucosamine--N-acetylmuramyl-(pentapeptide) pyrophosphoryl-undecaprenol N-acetylglucosamine transferase.